The primary structure comprises 348 residues: Phosphoribosylformylglycinamidine cyclo-ligase (348 aa).

Belongs to the AIR synthase family.

Its subcellular location is the cytoplasm. The catalysed reaction is 2-formamido-N(1)-(5-O-phospho-beta-D-ribosyl)acetamidine + ATP = 5-amino-1-(5-phospho-beta-D-ribosyl)imidazole + ADP + phosphate + H(+). It participates in purine metabolism; IMP biosynthesis via de novo pathway; 5-amino-1-(5-phospho-D-ribosyl)imidazole from N(2)-formyl-N(1)-(5-phospho-D-ribosyl)glycinamide: step 2/2. This chain is Phosphoribosylformylglycinamidine cyclo-ligase, found in Roseobacter denitrificans (strain ATCC 33942 / OCh 114) (Erythrobacter sp. (strain OCh 114)).